Reading from the N-terminus, the 335-residue chain is Zinc finger protein CO3 (335 aa).

Residues cysteine 15, cysteine 18, cysteine 38, and histidine 43 each contribute to the Zn(2+) site. Residues 15 to 57 (CDSCRSAPCAFYCLADSAALCATCDADVHSVNPLARRHRRVPM) form a B box-type; atypical zinc finger. A disordered region spans residues 141-179 (AGEKEDASSSKDCSSSHGKSSEGSHEFAVPGEPVPERQG). The 43-residue stretch at 268 to 310 (REARVHRYREKRKTRRFEKTIRYASRKAYAETRPRIKGRFAKR) folds into the CCT domain.

This sequence belongs to the CONSTANS family.

It localises to the nucleus. In terms of biological role, probable transcription factor involved in the regulation of flowering time under short day (SD) conditions. Functions as a repressor of flowering under SD conditions, independently of HD1, EHD1, MADS50 and MADS51. Controls flowering time under SD conditions by negatively regulating the expression of HD3A and FTL. The polypeptide is Zinc finger protein CO3 (Oryza sativa subsp. japonica (Rice)).